A 521-amino-acid chain; its full sequence is Bacillolysin (521 aa).

Positions 1–27 (MGLGKKLSVAVAASFMSLSISLPGVQA) are cleaved as a signal peptide. Positions 28 to 221 (AEGHQLKENQ…ILKQQNKVEH (194 aa)) are cleaved as a propeptide — activation peptide. Aspartate 360 is a binding site for Ca(2+). Position 364 (histidine 364) interacts with Zn(2+). The active site involves glutamate 365. Zn(2+) contacts are provided by histidine 368 and glutamate 388. Residues aspartate 399, aspartate 402, aspartate 404, and glutamate 407 each coordinate Ca(2+). The Proton donor role is filled by histidine 449.

Belongs to the peptidase M4 family. It depends on Ca(2+) as a cofactor. Requires Zn(2+) as cofactor.

It is found in the secreted. The enzyme catalyses Similar, but not identical, to that of thermolysin.. Extracellular zinc metalloprotease. The polypeptide is Bacillolysin (nprE) (Bacillus subtilis subsp. amylosacchariticus).